The following is a 557-amino-acid chain: Neurofilament light polypeptide (557 aa).

Ser2 bears the N-acetylserine mark. Residues 2–89 (SSYSYDPYYT…KIVRTQEKAQ (88 aa)) form a head region. One can recognise an IF rod domain in the interval 86-396 (EKAQLQDLND…KLLEGEETRL (311 aa)). The segment at 90-121 (LQDLNDRFANFIERVHELEQRNKVLEAELLLL) is coil 1A. The tract at residues 122 to 134 (RQKHNEPSRLRDL) is linker 1. Residues 135–230 (YEQEVRELRL…KVHEEELAQL (96 aa)) form a coil 1B region. The segment at 231–248 (QSQVQYAQISLEVEVAKP) is linker 12. The coil 2A stretch occupies residues 249–267 (DLSSALRDIRAQYEKLAAK). The tract at residues 268-276 (NMQSAEDWF) is linker 2. Residues 277–392 (KSRFTVLTQS…AAYRKLLEGE (116 aa)) form a coil 2B region. A tail, subdomain A region spans residues 393-437 (ETRLSFSGVGAITSGYTQSAPVFGRSAYSLQSSSYMTSRAFPTYY). Positions 393–557 (ETRLSFSGVG…KKKKKKKKKK (165 aa)) are tail. The interval 438 to 557 (SSHVQEEQLD…KKKKKKKKKK (120 aa)) is tail, subdomain B (acidic). The segment at 452–557 (IESSRAEEAK…KKKKKKKKKK (106 aa)) is disordered. Over residues 453-464 (ESSRAEEAKAEA) the composition is skewed to basic and acidic residues. The span at 465 to 538 (PEEEEEEAGE…GEGEEEEEGK (74 aa)) shows a compositional bias: acidic residues. Basic and acidic residues predominate over residues 539–548 (GEEPAEEESK).

It belongs to the intermediate filament family. Forms homodimers (in vitro).

Its subcellular location is the cell projection. It is found in the axon. The protein resides in the cytoplasm. The protein localises to the cytoskeleton. In terms of biological role, neurofilaments usually contain three intermediate filament proteins: NEFL, NEFM, and NEFH which are involved in the maintenance of neuronal caliber. May additionally cooperate with other neuronal intermediate filament proteins to form neuronal filamentous networks. In Xenopus tropicalis (Western clawed frog), this protein is Neurofilament light polypeptide (nefl).